A 468-amino-acid chain; its full sequence is Cysteine--tRNA ligase (468 aa).

Position 33 (Cys-33) interacts with Zn(2+). Residues 35–45 (ATVQGLPHIGH) carry the 'HIGH' region motif. Residues Cys-211, His-236, and Glu-240 each contribute to the Zn(2+) site. The short motif at 267 to 271 (KMSKS) is the 'KMSKS' region element. Lys-270 serves as a coordination point for ATP.

Belongs to the class-I aminoacyl-tRNA synthetase family. As to quaternary structure, monomer. Requires Zn(2+) as cofactor.

It is found in the cytoplasm. The catalysed reaction is tRNA(Cys) + L-cysteine + ATP = L-cysteinyl-tRNA(Cys) + AMP + diphosphate. The sequence is that of Cysteine--tRNA ligase from Mycolicibacterium paratuberculosis (strain ATCC BAA-968 / K-10) (Mycobacterium paratuberculosis).